We begin with the raw amino-acid sequence, 502 residues long: Cytochrome P450 3A40 (502 aa).

C443 lines the heme pocket.

Belongs to the cytochrome P450 family. The cofactor is heme.

The protein resides in the endoplasmic reticulum membrane. Its subcellular location is the microsome membrane. It carries out the reaction an organic molecule + reduced [NADPH--hemoprotein reductase] + O2 = an alcohol + oxidized [NADPH--hemoprotein reductase] + H2O + H(+). This chain is Cytochrome P450 3A40 (cyp3a40), found in Oryzias latipes (Japanese rice fish).